The following is a 78-amino-acid chain: NAD(P)H-quinone oxidoreductase subunit O (78 aa).

Belongs to the complex I NdhO subunit family. In terms of assembly, NDH-1 can be composed of about 15 different subunits; different subcomplexes with different compositions have been identified which probably have different functions.

The protein resides in the cellular thylakoid membrane. It catalyses the reaction a plastoquinone + NADH + (n+1) H(+)(in) = a plastoquinol + NAD(+) + n H(+)(out). It carries out the reaction a plastoquinone + NADPH + (n+1) H(+)(in) = a plastoquinol + NADP(+) + n H(+)(out). In terms of biological role, NDH-1 shuttles electrons from an unknown electron donor, via FMN and iron-sulfur (Fe-S) centers, to quinones in the respiratory and/or the photosynthetic chain. The immediate electron acceptor for the enzyme in this species is believed to be plastoquinone. Couples the redox reaction to proton translocation, and thus conserves the redox energy in a proton gradient. Cyanobacterial NDH-1 also plays a role in inorganic carbon-concentration. The sequence is that of NAD(P)H-quinone oxidoreductase subunit O from Prochlorococcus marinus (strain MIT 9301).